We begin with the raw amino-acid sequence, 384 residues long: Chaperone protein DnaJ 1 (384 aa).

Residues 4-68 enclose the J domain; that stretch reads DYYGLLGVAR…EKRRIVDMGG (65 aa). The segment at 133–215 adopts a CR-type zinc-finger fold; that stretch reads GVTKHLTVDT…CGGDGRVRAR (83 aa). Zn(2+) is bound by residues cysteine 146, cysteine 149, cysteine 163, cysteine 166, cysteine 189, cysteine 192, cysteine 203, and cysteine 206. 4 CXXCXGXG motif repeats span residues 146–153, 163–170, 189–196, and 203–210; these read CDACHGSG, CETCGGAG, CPTCRGAG, and CHKCGGDG.

Belongs to the DnaJ family. In terms of assembly, homodimer. Zn(2+) serves as cofactor.

The protein resides in the cytoplasm. Participates actively in the response to hyperosmotic and heat shock by preventing the aggregation of stress-denatured proteins and by disaggregating proteins, also in an autonomous, DnaK-independent fashion. Unfolded proteins bind initially to DnaJ; upon interaction with the DnaJ-bound protein, DnaK hydrolyzes its bound ATP, resulting in the formation of a stable complex. GrpE releases ADP from DnaK; ATP binding to DnaK triggers the release of the substrate protein, thus completing the reaction cycle. Several rounds of ATP-dependent interactions between DnaJ, DnaK and GrpE are required for fully efficient folding. Also involved, together with DnaK and GrpE, in the DNA replication of plasmids through activation of initiation proteins. This Nocardia farcinica (strain IFM 10152) protein is Chaperone protein DnaJ 1.